The primary structure comprises 446 residues: MKKAYVKSYGCQMNAYDAGRMADVLAAEGYSATDTVEEADVVVLNTCHIREKAAEKVYSELGRLRVLKGERAESGHDTRIVVAGCVAQAEGREILSRAPAVDVVVGPQSYHRLPDLLRQSRETRVVDTEFPAEDKFDHLPARRNRGVTGFLTVQEGCDKFCAFCVVPYTRGAEVSRSVAAVVDEARRLVEGGVREITLIGQNVNAYHGNGPDGAPATLGHLMDALSAVPGLLRLRYTTSHPNDFADDLIAAHATNPLVMPYLHLPVQSGSDRILHAMNRRHTGDAYRRLIERIRNARPDIALSSDFIVGFPGETDADFAETMRLVSDIGFSAAFSFKYSPRAGTPAAEREDAVPEAVKTERLAALQDLLDRQRHAYNAASVGTLTEILVEKTGRHPGQVAGKTPHLQAVQFDAPASTIGTVVPVRITRAGSNSLFGETLEGAAAAA.

Residues 2 to 122 form the MTTase N-terminal domain; it reads KKAYVKSYGC…LPDLLRQSRE (121 aa). [4Fe-4S] cluster-binding residues include Cys-11, Cys-47, Cys-85, Cys-157, Cys-161, and Cys-164. A Radical SAM core domain is found at 143–375; that stretch reads RNRGVTGFLT…QDLLDRQRHA (233 aa). Residues 378–440 form the TRAM domain; the sequence is AASVGTLTEI…SNSLFGETLE (63 aa).

This sequence belongs to the methylthiotransferase family. MiaB subfamily. Monomer. Requires [4Fe-4S] cluster as cofactor.

It localises to the cytoplasm. The catalysed reaction is N(6)-dimethylallyladenosine(37) in tRNA + (sulfur carrier)-SH + AH2 + 2 S-adenosyl-L-methionine = 2-methylsulfanyl-N(6)-dimethylallyladenosine(37) in tRNA + (sulfur carrier)-H + 5'-deoxyadenosine + L-methionine + A + S-adenosyl-L-homocysteine + 2 H(+). Catalyzes the methylthiolation of N6-(dimethylallyl)adenosine (i(6)A), leading to the formation of 2-methylthio-N6-(dimethylallyl)adenosine (ms(2)i(6)A) at position 37 in tRNAs that read codons beginning with uridine. In Methylorubrum extorquens (strain PA1) (Methylobacterium extorquens), this protein is tRNA-2-methylthio-N(6)-dimethylallyladenosine synthase.